Consider the following 63-residue polypeptide: Eumenitin VP1 (63 aa).

A signal peptide spans 1-22; the sequence is MRGTSFILFAVVVILGFLHANA. AXPX repeat units follow at residues 22 to 25, 26 to 29, 32 to 35, 40 to 43, and 44 to 47; these read AEPL, ANPA, ANPD, ADPL, and ADPE. A propeptide spanning residues 23–48 is cleaved from the precursor; it reads EPLANPAPLANPDPLANADPLADPEA.

In terms of tissue distribution, expressed by the venom gland.

It localises to the secreted. The protein resides in the target cell membrane. Functionally, antimicrobial peptide with activities against the fungi B.cinerea (MIC=5 uM) and C.albicans (MIC=100 uM), the Gram-negative bacterium E.coli (MIC=25 uM) and the Gram-positive bacterium S.aureus (MIC=100 uM). Shows cytolytic activity against insect cell lines. Has no hemolytic activity against human erythrocytes. In vivo, peptide injection in the vicinity of the head and thorax of lepidopteran larvae induces feeding disorder followed by death due to starvation. The polypeptide is Eumenitin VP1 (Eumenes pomiformis (Potter wasp)).